Here is a 235-residue protein sequence, read N- to C-terminus: Orotidine 5'-phosphate decarboxylase (235 aa).

Residues Asp10, Lys33, 60-69 (DLKMHDIPNT), Thr123, Arg185, Gln194, Gly214, and Arg215 contribute to the substrate site. Lys62 acts as the Proton donor in catalysis.

This sequence belongs to the OMP decarboxylase family. Type 1 subfamily. Homodimer.

It catalyses the reaction orotidine 5'-phosphate + H(+) = UMP + CO2. Its pathway is pyrimidine metabolism; UMP biosynthesis via de novo pathway; UMP from orotate: step 2/2. Functionally, catalyzes the decarboxylation of orotidine 5'-monophosphate (OMP) to uridine 5'-monophosphate (UMP). The chain is Orotidine 5'-phosphate decarboxylase from Lactobacillus acidophilus (strain ATCC 700396 / NCK56 / N2 / NCFM).